Here is an 888-residue protein sequence, read N- to C-terminus: Isoleucine--tRNA ligase (888 aa).

The 'HIGH' region signature appears at 61–71 (PYANGSIHIGH). Glu551 lines the L-isoleucyl-5'-AMP pocket. A 'KMSKS' region motif is present at residues 592-596 (KMSKQ). Lys595 contributes to the ATP binding site. 4 residues coordinate Zn(2+): Cys862, Cys865, Cys879, and Cys882.

It belongs to the class-I aminoacyl-tRNA synthetase family. IleS type 1 subfamily. Monomer. Requires Zn(2+) as cofactor.

The protein localises to the cytoplasm. The enzyme catalyses tRNA(Ile) + L-isoleucine + ATP = L-isoleucyl-tRNA(Ile) + AMP + diphosphate. Functionally, catalyzes the attachment of isoleucine to tRNA(Ile). As IleRS can inadvertently accommodate and process structurally similar amino acids such as valine, to avoid such errors it has two additional distinct tRNA(Ile)-dependent editing activities. One activity is designated as 'pretransfer' editing and involves the hydrolysis of activated Val-AMP. The other activity is designated 'posttransfer' editing and involves deacylation of mischarged Val-tRNA(Ile). This Mycoplasmopsis pulmonis (strain UAB CTIP) (Mycoplasma pulmonis) protein is Isoleucine--tRNA ligase.